Reading from the N-terminus, the 919-residue chain is MADNAGEYHDAEKHAPEQQAPPPQQPAHAAAPAQDDEPDDDIDALIEELFSEDVQEEQEDNDDAPAAGEAKAVPEELLQTDMNTGLTMSEVEERRKKYGLNQMKEELENPFLKFIMFFVGPIQFVMEMAAALAAGLRDWVDFGVICALLMLNAVVGFVQEYQAGSIVDELKKSLALKAVVIREGQVHELEANEVVPGDILKLDEGTIICADGRVVTPDVHLQVDQSAITGESLAVDKHYGDPTFASSGVKRGEGLMVVTATGDSTFVGRAASLVNAAAGGTGHFTEVLNGIGTILLVLVLLTLFCIYTAAFYRSVRLARLLEYTLAITIIGVPVGLPAVVTTTMAVGAAYLAEKQAIVQKLSAIESLAGVEVLCSDKTGTLTKNKLSLGEPFTVSGVSGDDLVLTACLAASRKRKGLDAIDKAFLKALKNYPGPRSMLTKYKVIEFQPFDPVSKKVTAYVQAPDGTRITCVKGAPLWVLKTVEEDHPIPEDVLSAYKDKVGDLASRGYRSLGVARKIEGQHWEIMGIMPCSDPPRHDTARTISEAKRLGLRVKMLTGDAVDIAKETARQLGMGTNIYNAERLGLTGGGNMPGSEVYDFVEAADGFGEVFPQHKYAVVDILQQRGYLVAMTGDGVNDAPSLKKADTGIAVEGATDAARSAADIVFLAPGLSAIIDALKTSRQIFHRMYSYVVYRIALSLHLEIFLGLWLIIRNQLLNLELVVFIAIFADVATLAIAYDNAPYSMKPVKWNLPRLWGLSTVIGIVLAIGTWITNTTMIAQGQNRGIVQNFGVQDEVLFLEISLTENWLIFVTRCNGPFWSSIPSWQLSGAVLAVDILATMFCIFGWFKGGHQTSIVAVLRIWMYSFGIFCIMAGTYYILSESAGFDRMMNGKPKESRNQRSIEDLVVALQRTSTRHEKGDA.

A compositionally biased stretch (basic and acidic residues) spans 1-16 (MADNAGEYHDAEKHAP). The tract at residues 1–73 (MADNAGEYHD…APAAGEAKAV (73 aa)) is disordered. The Cytoplasmic segment spans residues 1–113 (MADNAGEYHD…KEELENPFLK (113 aa)). The segment covering 34-63 (QDDEPDDDIDALIEELFSEDVQEEQEDNDD) has biased composition (acidic residues). A Phosphoserine modification is found at Ser-89. Residues 114-134 (FIMFFVGPIQFVMEMAAALAA) traverse the membrane as a helical segment. The Extracellular segment spans residues 135–138 (GLRD). A helical transmembrane segment spans residues 139-158 (WVDFGVICALLMLNAVVGFV). Residues 159-289 (QEYQAGSIVD…GTGHFTEVLN (131 aa)) are Cytoplasmic-facing. A helical membrane pass occupies residues 290–311 (GIGTILLVLVLLTLFCIYTAAF). Topologically, residues 312 to 322 (YRSVRLARLLE) are extracellular. The chain crosses the membrane as a helical span at residues 323–345 (YTLAITIIGVPVGLPAVVTTTMA). The Cytoplasmic segment spans residues 346–717 (VGAAYLAEKQ…LIIRNQLLNL (372 aa)). The active-site 4-aspartylphosphate intermediate is Asp-376. Phosphoserine is present on Ser-494. Mg(2+)-binding residues include Asp-632 and Asp-636. The helical transmembrane segment at 718–736 (ELVVFIAIFADVATLAIAY) threads the bilayer. Topologically, residues 737–752 (DNAPYSMKPVKWNLPR) are extracellular. Residues 753–772 (LWGLSTVIGIVLAIGTWITN) traverse the membrane as a helical segment. Topologically, residues 773-824 (TTMIAQGQNRGIVQNFGVQDEVLFLEISLTENWLIFVTRCNGPFWSSIPSWQ) are cytoplasmic. The helical transmembrane segment at 825–845 (LSGAVLAVDILATMFCIFGWF) threads the bilayer. Over 846–858 (KGGHQTSIVAVLR) the chain is Extracellular. A helical membrane pass occupies residues 859 to 875 (IWMYSFGIFCIMAGTYY). At 876–919 (ILSESAGFDRMMNGKPKESRNQRSIEDLVVALQRTSTRHEKGDA) the chain is on the cytoplasmic side. Ser-899 carries the post-translational modification Phosphoserine.

It belongs to the cation transport ATPase (P-type) (TC 3.A.3) family. Type IIIA subfamily.

Its subcellular location is the cell membrane. It carries out the reaction ATP + H2O + H(+)(in) = ADP + phosphate + 2 H(+)(out). Its function is as follows. The plasma membrane ATPase of plants and fungi is a hydrogen ion pump. The proton gradient it generates drives the active transport of nutrients by H(+)-symport. The resulting external acidification and/or internal alkinization may mediate growth responses. The sequence is that of Plasma membrane ATPase 1 (pma1) from Schizosaccharomyces pombe (strain 972 / ATCC 24843) (Fission yeast).